A 134-amino-acid polypeptide reads, in one-letter code: TSC22 domain family protein 3 (134 aa).

The segment at 1-60 (MNTEMYQTPMEVAVYQLHNFSISFFSSLLGGDVVSVKLDNSASGASVVALDNKIEQAMDL) is AP1-binding. The segment at 76–97 (LKEQIRELVEKNSQLERENTLL) is leucine-zipper. The interval 101–134 (ASPEQLEKFQSRLSPEEPAPEAPETPEAPGGSAV) is disordered. Phosphoserine is present on serine 102. The residue at position 125 (threonine 125) is a Phosphothreonine. Residues 125 to 134 (TPEAPGGSAV) are compositionally biased toward low complexity.

Belongs to the TSC-22/Dip/Bun family. As to quaternary structure, can form homodimers, however it is likely to function as a monomer. Interacts with NFKB1. Interacts (via N-terminus) with JUN and FOS; these interactions inhibit the binding of active AP1 to its target DNA. Interacts with MYOD1. Interacts with HDAC1; this interaction affects HDAC1 activity on MYOG promoter and thus inhibits MYOD1 transcriptional activity.

It is found in the cytoplasm. The protein localises to the nucleus. Its function is as follows. Protects T-cells from IL2 deprivation-induced apoptosis through the inhibition of FOXO3A transcriptional activity that leads to the down-regulation of the pro-apoptotic factor BCL2L11. In macrophages, plays a role in the anti-inflammatory and immunosuppressive effects of glucocorticoids and IL10. In T-cells, inhibits anti-CD3-induced NFKB1 nuclear translocation and thereby NFKB1 DNA-binding activities. In vitro, suppresses AP-1 transcription factor complex DNA-binding activities. This chain is TSC22 domain family protein 3 (Tsc22d3), found in Rattus norvegicus (Rat).